The sequence spans 747 residues: MTSWADIQKLASDLQRVQLTQSSKKLSEVNCIEVLQKLIASQQIDVVYTRDGHTYVTKKHLETEIKNECVAAGGRAPLTDIAVALNIDFDHIERTARLIVSSDDEFTLSNAELFATGYSLCRTKISISVNTCIASATNFALFSMNKSLLIEKLSSTDFEGVVDGDTIYTSSFLDARQLVLRAVLVALTKVTPISTIQKRVGLTPKRFWIAFENLQALGEVPGTLIGSRTSPACSYRPKMYDYLVKTCVTNQYRQNEFLQMSTLKTLGLDSKTALEEVLGASEVKKLVNLNSIYMSKELMEQCVQTVQGEARNITLNTDYIVFVPDDIQNSGIAEIRMSLQTLNLPLDTADEDLIGEKIASTEKDTNFSDGFVYNNSILTEALKSINTQIEAKAHQEVEKIDVEKKKQCGSKAPAKVQEDTDDWGDNKKGGKGGKKGGKGGKNGGGGGKGATSSVPTGSGTVQVNSEELEEWLRESQTVPEEILTVVVETLHQDATSALRKQVQEIQALQLVVNAANSKKSLSAIGDKCRQLYDSFNTFEAGTTSFADPLGTDLRQYLLKTVGVDLACAILSYAIGIDNVHQLKEKQRDETIESLPEMVREPIRALFASLKSTDEDAVEKFHDAVYDCSVPSATSLSLRKIDKKGRAEVGVKVSADLCDQLASQSDPATTLLLSVLYLFSQAGRPTTASGKFVAQLIAQMKDFCPTNTFELLQSCQKGVVTCIKNQDDDVAKEILSEDIEKLKSAVLQ.

Residues 403-468 (EKKKQCGSKA…GTVQVNSEEL (66 aa)) are disordered. The span at 429–438 (GGKGGKKGGK) shows a compositional bias: basic residues. The span at 439–449 (GGKNGGGGGKG) shows a compositional bias: gly residues. The segment covering 450-465 (ATSSVPTGSGTVQVNS) has biased composition (polar residues).

This sequence belongs to the UFL1 family.

E3 UFM1-protein ligase that mediates ufmylation of target proteins. This chain is E3 UFM1-protein ligase 1 homolog (ufl-1), found in Caenorhabditis briggsae.